The chain runs to 913 residues: DNA polymerase (913 aa).

Positions 182–401 are contains conserved residues essential for 3' -&gt; 5' exonuclease activities; it reads PLIIASWDIE…AYARKDTDLP (220 aa).

Belongs to the DNA polymerase type-B family.

It catalyses the reaction DNA(n) + a 2'-deoxyribonucleoside 5'-triphosphate = DNA(n+1) + diphosphate. Functionally, in addition to polymerase activity, this DNA polymerase potentially exhibits 3' to 5' exonuclease activity. The protein is DNA polymerase (DPO) of Chlorella (PBCV-NY2A).